A 494-amino-acid chain; its full sequence is Metal cation symporter ZIP14 (494 aa).

Residues 1–34 form the signal peptide; that stretch reads MTLRRASGCRQLTLTIGLALTLGLLQWPIGDVRG. The Extracellular segment spans residues 35–152; sequence QDGASPAQVL…PTEAEVWGYG (118 aa). Residues 153–173 traverse the membrane as a helical segment; it reads LLCVTVISLCSLVGASVVPFM. Residues 174–181 are Cytoplasmic-facing; sequence RKTFYKRL. The chain crosses the membrane as a helical span at residues 182-202; it reads LLYFIALAIGTLYSNALFQLI. Over 203–219 the chain is Extracellular; sequence PEAFGFDPMEDYYVPKS. The chain crosses the membrane as a helical span at residues 220 to 240; sequence AVVFGGFYLFFFTEKILKMIL. Topologically, residues 241 to 397 are cytoplasmic; it reads KPKDTGGHGH…LLNAGMSIQQ (157 aa). The HHHGHXHX-motif signature appears at 248–255; sequence HGHGHSHF. Positions 376 to 381 match the XEXPHE-motif motif; the sequence is EEFPHE. A helical membrane pass occupies residues 398–418; sequence ALFFNFLSACCCYLGMGFGIL. The Extracellular segment spans residues 419–426; sequence AGNNFSPN. Residues 427–447 traverse the membrane as a helical segment; it reads WIFALAGGMFLYIALADMFPE. Residues 448 to 462 lie on the Cytoplasmic side of the membrane; the sequence is MNEVSREEEEAGGSG. A helical transmembrane segment spans residues 463–483; the sequence is FLLTFALQNAGLLTGFAIMLV. The Extracellular segment spans residues 484–494; that stretch reads LTIYSGQIQLG.

Belongs to the ZIP transporter (TC 2.A.5) family. As to quaternary structure, homotrimer.

The protein resides in the cell membrane. It is found in the apical cell membrane. The protein localises to the basolateral cell membrane. It localises to the early endosome membrane. Its subcellular location is the late endosome membrane. The protein resides in the lysosome membrane. The catalysed reaction is Zn(2+)(out) + 2 hydrogencarbonate(out) = Zn(2+)(in) + 2 hydrogencarbonate(in). It catalyses the reaction Mn(2+)(out) + 2 hydrogencarbonate(out) = Mn(2+)(in) + 2 hydrogencarbonate(in). The enzyme catalyses Fe(2+)(out) + 2 hydrogencarbonate(out) = Fe(2+)(in) + 2 hydrogencarbonate(in). It carries out the reaction Cd(2+)(out) + 2 hydrogencarbonate(out) = Cd(2+)(in) + 2 hydrogencarbonate(in). Broad-scope metal ion transporter with a preference for zinc uptake. Also mediates cellular uptake of nontransferrin-bound iron. In terms of biological role, electroneutral transporter of the plasma membrane mediating the cellular uptake of the divalent metal cations zinc, manganese and iron that are important for tissue homeostasis, metabolism, development and immunity. Functions as an energy-dependent symporter, transporting through the membranes an electroneutral complex composed of a divalent metal cation and two bicarbonate anions. Beside these endogenous cellular substrates, can also import cadmium a non-essential metal which is cytotoxic and carcinogenic. This is Metal cation symporter ZIP14 from Danio rerio (Zebrafish).